We begin with the raw amino-acid sequence, 1293 residues long: Putative DNA-directed RNA polymerase 008R (1293 aa).

Residues C61, C64, C71, H74, C99, C102, and C123 each coordinate Zn(2+). A DNA-binding region spans residues 270–339; sequence TNRKPMAGIK…PVMVTPFNVS (70 aa). The segment covering 354–376 has biased composition (basic and acidic residues); sequence EMRDGTVHRPSEWRPSHGDHMET. The segment at 354 to 390 is disordered; sequence EMRDGTVHRPSEWRPSHGDHMETADGSPLGRVTRPSY. Mg(2+)-binding residues include D474, D476, and D478. The tract at residues 724–734 is alpha-amanitin binding; it reads GQQYVGGSRPG. The interval 776–788 is bridging helix; the sequence is PREVFFHAKSGRE.

It belongs to the RNA polymerase beta' chain family.

The enzyme catalyses RNA(n) + a ribonucleoside 5'-triphosphate = RNA(n+1) + diphosphate. In terms of biological role, component of the DNA-dependent RNA polymerase that catalyzes the transcription of DNA into RNA using the four ribonucleoside triphosphates as substrates. Largest and catalytic component of RNA polymerase II which synthesizes mRNA precursors and many functional non-coding RNAs. Forms the polymerase active center together with the second largest subunit. This is Putative DNA-directed RNA polymerase 008R from Frog virus 3 (isolate Goorha) (FV-3).